We begin with the raw amino-acid sequence, 314 residues long: Olfactory receptor 8U9 (314 aa).

Residues 1 to 25 (MAQINCTQVTEFILVGLTDREELKM) are Extracellular-facing. Asn-5 carries an N-linked (GlcNAc...) asparagine glycan. Residues 26-46 (PLFVVFLSIYLFTTLGNLGLI) form a helical membrane-spanning segment. Over 47–54 (LVIRTDAR) the chain is Cytoplasmic. The chain crosses the membrane as a helical span at residues 55–75 (LHTPMYFFLSNLAFVDFCYSS). At 76 to 99 (VITPKMLGNFLYKQNMISFNACAA) the chain is on the extracellular side. Residues Cys-97 and Cys-189 are joined by a disulfide bond. A helical transmembrane segment spans residues 100–120 (QLGCFLAFMTAECLLLASMAY). Over 121-133 (DRYVAICNPLLYM) the chain is Cytoplasmic. The chain crosses the membrane as a helical span at residues 134–154 (VLMSPGICFQLVAAPYSYSFL). Residues 155–196 (VALFHAILTFRLCYCHSNAINHFYCDDMPLLRLTCSDTHSKQ) lie on the Extracellular side of the membrane. A helical membrane pass occupies residues 197–217 (LWIFVCAGIMFISSLLIVFIS). The Cytoplasmic portion of the chain corresponds to 218-237 (YTFIISAILRMRSAEGRRKA). Residues 238–258 (FSTCGSHMLAVTIFYGTLIFM) traverse the membrane as a helical segment. At 259–271 (YLQPSSNHSLDTD) the chain is on the extracellular side. N-linked (GlcNAc...) asparagine glycosylation occurs at Asn-265. Residues 272–292 (KMASVFYTVIIPMLNPLIYSL) traverse the membrane as a helical segment. Topologically, residues 293–314 (RNKEVKDALKKLIASKNQMLSS) are cytoplasmic.

It belongs to the G-protein coupled receptor 1 family.

It is found in the cell membrane. Functionally, potential odorant receptor. The chain is Olfactory receptor 8U9 from Mus musculus (Mouse).